Reading from the N-terminus, the 823-residue chain is Aminopeptidase O (823 aa).

His-481 is a Zn(2+) binding site. Catalysis depends on Glu-482, which acts as the Proton acceptor. 2 residues coordinate Zn(2+): His-485 and Glu-504. The short motif at 693-703 is the Nucleolar localization signal element; it reads RRPRKRKRGKR.

The protein belongs to the peptidase M1 family. It depends on Zn(2+) as a cofactor. In terms of tissue distribution, expressed in testis, heart, brain, lung, liver, skeletal muscle, kidney and ovary. Expressed in vascular tissues.

It is found in the nucleus. It localises to the nucleolus. The protein localises to the cytoplasm. Its function is as follows. Aminopeptidase which catalyzes the hydrolysis of amino acid residues from the N-terminus of peptide or protein substrates. The protein is Aminopeptidase O (Aopep) of Mus musculus (Mouse).